The chain runs to 325 residues: Secreted frizzled-related protein 3 (325 aa).

The N-terminal stretch at 1–32 (MVCGSPGGMLLLRAGLLALAALCLLRVPGARA) is a signal peptide. In terms of domain architecture, FZ spans 33–150 (AACEPVRIPL…VYDRGVCISP (118 aa)). Intrachain disulfides connect Cys-35/Cys-96, Cys-43/Cys-89, Cys-80/Cys-119, Cys-108/Cys-147, and Cys-112/Cys-136. Asn-49 carries an N-linked (GlcNAc...) asparagine glycan. The NTR domain occupies 178-298 (CKCKPIRATQ…WDMKLRHLGL (121 aa)). Residues 297–325 (GLSKSDSSNSDSTQSQKSGRNSNPRQARN) form a disordered region. The segment covering 299-314 (SKSDSSNSDSTQSQKS) has biased composition (low complexity). Positions 315 to 325 (GRNSNPRQARN) are enriched in polar residues.

Belongs to the secreted frizzled-related protein (sFRP) family. Interacts with MYOC. In terms of tissue distribution, expressed primarily in the cartilaginous cores of the long bone during embryonic and fetal development and in the appendicular skeleton (6-13 weeks). At 13 weeks of gestation, transcripts were present in early chondroblasts of the tarsal bones of the foot, the carpal bones of the hands and the epiphysis of long bones. Highly expressed in placenta and heart, followed by brain, skeletal muscle, kidney and pancreas. Weakly expressed in lung and liver.

It is found in the secreted. Soluble frizzled-related proteins (sFRPS) function as modulators of Wnt signaling through direct interaction with Wnts. They have a role in regulating cell growth and differentiation in specific cell types. SFRP3/FRZB appears to be involved in limb skeletogenesis. Antagonist of Wnt8 signaling. Regulates chondrocyte maturation and long bone development. This chain is Secreted frizzled-related protein 3 (FRZB), found in Homo sapiens (Human).